A 461-amino-acid chain; its full sequence is V-type ATP synthase beta chain (461 aa).

It belongs to the ATPase alpha/beta chains family.

Functionally, produces ATP from ADP in the presence of a proton gradient across the membrane. The V-type beta chain is a regulatory subunit. The chain is V-type ATP synthase beta chain from Streptococcus pneumoniae (strain CGSP14).